A 438-amino-acid chain; its full sequence is UDP-N-acetylmuramoylalanine--D-glutamate ligase (438 aa).

115-121 (GSNGKST) serves as a coordination point for ATP.

Belongs to the MurCDEF family.

It is found in the cytoplasm. The enzyme catalyses UDP-N-acetyl-alpha-D-muramoyl-L-alanine + D-glutamate + ATP = UDP-N-acetyl-alpha-D-muramoyl-L-alanyl-D-glutamate + ADP + phosphate + H(+). It functions in the pathway cell wall biogenesis; peptidoglycan biosynthesis. Cell wall formation. Catalyzes the addition of glutamate to the nucleotide precursor UDP-N-acetylmuramoyl-L-alanine (UMA). The polypeptide is UDP-N-acetylmuramoylalanine--D-glutamate ligase (Vibrio atlanticus (strain LGP32) (Vibrio splendidus (strain Mel32))).